The following is a 307-amino-acid chain: MLNNLEQLTTEKVNLETLNIDEKSPLEIVKVINEEDKKVALAVEKELPNIAKAVEKIIEAFKTNGRLIYLGAGTSGRLGILDAAECPPTFGTSKEQVIGLIAGGREALLEAVEGAEDSKEEGIKDLKNIKLTSQDIVVGIAASGRTPYVVGGLNYANNIGATTVALCCNKDAVITRVADIAIVPVVGPEVIAGSTRLKSGTAQKLVLNMLTTASMIGVGKVYKNLMVDVQTTNEKLEDRSKRIVMMATGVGEIEATEILKNSNYQPKVAILMINTGCSFVEATAKLQEAGGFVKKALEYIKEGEEIC.

The region spanning isoleucine 57 to lysine 220 is the SIS domain. Catalysis depends on glutamate 85, which acts as the Proton donor. Residue glutamate 116 is part of the active site.

Belongs to the GCKR-like family. MurNAc-6-P etherase subfamily. Homodimer.

It catalyses the reaction N-acetyl-D-muramate 6-phosphate + H2O = N-acetyl-D-glucosamine 6-phosphate + (R)-lactate. It participates in amino-sugar metabolism; N-acetylmuramate degradation. Functionally, specifically catalyzes the cleavage of the D-lactyl ether substituent of MurNAc 6-phosphate, producing GlcNAc 6-phosphate and D-lactate. The polypeptide is N-acetylmuramic acid 6-phosphate etherase (Alkaliphilus metalliredigens (strain QYMF)).